An 86-amino-acid polypeptide reads, in one-letter code: Defensin-like protein a (86 aa).

Residues 1–23 form the signal peptide; it reads MRCSVLFVVSYVIMSLLISHVQG. Disulfide bonds link cysteine 33-cysteine 81, cysteine 43-cysteine 67, cysteine 51-cysteine 76, and cysteine 65-cysteine 78.

The protein belongs to the DEFL family. In terms of tissue distribution, expressed specifically in anthers.

Its subcellular location is the secreted. Its function is as follows. Involved in self-incompatibility. The chain is Defensin-like protein a (SCRa) from Arabidopsis lyrata (Lyre-leaved rock-cress).